Reading from the N-terminus, the 149-residue chain is MHCPFCAAVDTKVIDSRLVGDGSQVRRRRQCLECHERFTTFEMAELVMPRVIKSDDIREPFDEEKLRRGMQKALEKRPVSSDDVEMAISYIKSQLRATGEREVPSKMIGNLVMDELKKLDKVAYIRFASVYRSFEDIREFGEEIARLQG.

A zinc finger spans residues 3–34; sequence CPFCAAVDTKVIDSRLVGDGSQVRRRRQCLEC. Positions 49 to 139 constitute an ATP-cone domain; that stretch reads PRVIKSDDIR…VYRSFEDIRE (91 aa).

Belongs to the NrdR family. Zn(2+) is required as a cofactor.

Functionally, negatively regulates transcription of bacterial ribonucleotide reductase nrd genes and operons by binding to NrdR-boxes. In Photorhabdus laumondii subsp. laumondii (strain DSM 15139 / CIP 105565 / TT01) (Photorhabdus luminescens subsp. laumondii), this protein is Transcriptional repressor NrdR.